A 154-amino-acid chain; its full sequence is MAARLCCQLDPARDVLCLRPVGAESCGRPLSWSPGALPPPSPPSVPADDGSHLSLRGLPACAFSSAGPCALRFTSARRMETTVNAPQSLPTTLHKRTLGLSPRSTTWIEEYIKDCVFKDWEESGEELRLKVFVLGGCRHKLVCSPAPCNFFTSA.

The segment at Pro-68–Phe-117 is mitochondrial targeting sequence.

This sequence belongs to the orthohepadnavirus protein X family. May form homodimer. May interact with host CEBPA, CFLAR, CREB1, DDB1, E4F1, HBXIP, HSPD1/HSP60, NFKBIA, POLR2E and SMAD4. Interacts with host SMC5-SMC6 complex and induces its degradation. Interacts with host TRPC4AP; leading to prevent ubiquitination of TRPC4AP. Interacts with host PLSCR1; this interaction promotes ubiquitination and degradation of HBx and impairs HBx-mediated cell proliferation. A fraction may be phosphorylated in insect cells and HepG2 cells, a human hepatoblastoma cell line. Phosphorylated in vitro by host protein kinase C or mitogen-activated protein kinase. N-acetylated in insect cells.

The protein resides in the host cytoplasm. Its subcellular location is the host nucleus. It is found in the host mitochondrion. Multifunctional protein that plays a role in silencing host antiviral defenses and promoting viral transcription. Does not seem to be essential for HBV infection. May be directly involved in development of cirrhosis and liver cancer (hepatocellular carcinoma). Most of cytosolic activities involve modulation of cytosolic calcium. The effect on apoptosis is controversial depending on the cell types in which the studies have been conducted. May induce apoptosis by localizing in mitochondria and causing loss of mitochondrial membrane potential. May also modulate apoptosis by binding host CFLAR, a key regulator of the death-inducing signaling complex (DISC). Promotes viral transcription by using the host E3 ubiquitin ligase DDB1 to target the SMC5-SMC6 complex to proteasomal degradation. This host complex would otherwise bind to viral episomal DNA, and prevents its transcription. Moderately stimulates transcription of many different viral and cellular transcription elements. Promoters and enhancers stimulated by HBx contain DNA binding sites for NF-kappa-B, AP-1, AP-2, c-EBP, ATF/CREB, or the calcium-activated factor NF-AT. This chain is Protein X, found in Hepatitis B virus genotype H subtype adw4 (isolate Nicaragua/2928Nic/1997) (HBV-H).